Here is a 474-residue protein sequence, read N- to C-terminus: ATP-dependent rRNA helicase RRP3 (474 aa).

Basic residues predominate over residues 1 to 10; the sequence is MPSMKRRKLS. Positions 1–43 are disordered; that stretch reads MPSMKRRKLSHTPPQGEAEDGFSDSETSQASLQETPGNDEKIE. Over residues 24-36 the composition is skewed to polar residues; that stretch reads DSETSQASLQETP. The Q motif motif lies at 48-76; it reads KSFKDLGIIDSLCEACDSLGYKAPTQIQA. One can recognise a Helicase ATP-binding domain in the interval 79–250; it reads IPLALQGRDL…RASLSNPLRV (172 aa). 92 to 99 lines the ATP pocket; it reads AETGSGKT. The DEAD box signature appears at 198-201; sequence DEAD. In terms of domain architecture, Helicase C-terminal spans 278 to 422; the sequence is YLIYLLNEFP…EYKVEKEEVM (145 aa). The disordered stretch occupies residues 442-474; it reads LHENRGKKGATLRNRRIGKGAKRSRDEMDREEG. Positions 448 to 463 are enriched in basic residues; that stretch reads KKGATLRNRRIGKGAK. Basic and acidic residues predominate over residues 464 to 474; sequence RSRDEMDREEG.

It belongs to the DEAD box helicase family. DDX47/RRP3 subfamily. As to quaternary structure, interacts with the SSU processome.

The protein localises to the nucleus. It carries out the reaction ATP + H2O = ADP + phosphate + H(+). In terms of biological role, ATP-dependent rRNA helicase required for pre-ribosomal RNA processing. Involved in the maturation of the 35S-pre-rRNA and to its cleavage to mature 18S rRNA. This Coccidioides immitis (strain RS) (Valley fever fungus) protein is ATP-dependent rRNA helicase RRP3.